Consider the following 91-residue polypeptide: Probable Fe(2+)-trafficking protein (91 aa).

The protein belongs to the Fe(2+)-trafficking protein family.

Its function is as follows. Could be a mediator in iron transactions between iron acquisition and iron-requiring processes, such as synthesis and/or repair of Fe-S clusters in biosynthetic enzymes. In Mannheimia succiniciproducens (strain KCTC 0769BP / MBEL55E), this protein is Probable Fe(2+)-trafficking protein.